A 173-amino-acid polypeptide reads, in one-letter code: Lipoprotein signal peptidase (173 aa).

Transmembrane regions (helical) follow at residues 67-87 (WISL…PHLG) and 92-112 (MGFG…FAFG). Active-site residues include D116 and D132. Residues 125–145 (FPVFNGADIAINLGLACLLIG) traverse the membrane as a helical segment. The interval 151–173 (SRTPAPARPASKQIREPTDTTGG) is disordered. Positions 163 to 173 (QIREPTDTTGG) are enriched in basic and acidic residues.

The protein belongs to the peptidase A8 family.

It localises to the cell inner membrane. The catalysed reaction is Release of signal peptides from bacterial membrane prolipoproteins. Hydrolyzes -Xaa-Yaa-Zaa-|-(S,diacylglyceryl)Cys-, in which Xaa is hydrophobic (preferably Leu), and Yaa (Ala or Ser) and Zaa (Gly or Ala) have small, neutral side chains.. It functions in the pathway protein modification; lipoprotein biosynthesis (signal peptide cleavage). In terms of biological role, this protein specifically catalyzes the removal of signal peptides from prolipoproteins. This chain is Lipoprotein signal peptidase, found in Gloeobacter violaceus (strain ATCC 29082 / PCC 7421).